Consider the following 224-residue polypeptide: PKHD-type hydroxylase SO_3913 (224 aa).

In terms of domain architecture, Fe2OG dioxygenase spans 78 to 176; that stretch reads QFYPPLFNRY…RTSAFMWLQS (99 aa). The Fe cation site is built by His96, Asp98, and His157. Arg167 provides a ligand contact to 2-oxoglutarate.

Requires Fe(2+) as cofactor. It depends on L-ascorbate as a cofactor.

The protein is PKHD-type hydroxylase SO_3913 of Shewanella oneidensis (strain ATCC 700550 / JCM 31522 / CIP 106686 / LMG 19005 / NCIMB 14063 / MR-1).